We begin with the raw amino-acid sequence, 186 residues long: Translation initiation factor IF-3 (186 aa).

The protein belongs to the IF-3 family. In terms of assembly, monomer.

The protein localises to the cytoplasm. In terms of biological role, IF-3 binds to the 30S ribosomal subunit and shifts the equilibrium between 70S ribosomes and their 50S and 30S subunits in favor of the free subunits, thus enhancing the availability of 30S subunits on which protein synthesis initiation begins. This chain is Translation initiation factor IF-3, found in Chlamydia caviae (strain ATCC VR-813 / DSM 19441 / 03DC25 / GPIC) (Chlamydophila caviae).